We begin with the raw amino-acid sequence, 891 residues long: Protein SEY1 homolog (891 aa).

Over 1–754 (MNLHLVDSDG…LRAAEAGNQR (754 aa)) the chain is Cytoplasmic. The GB1/RHD3-type G domain occupies 52–318 (GLNYHVVGVF…RCSDYLFSYH (267 aa)). GTP is bound at residue 62 to 69 (GGQSSGKS). A helical membrane pass occupies residues 755–775 (LPAWVIPALFILGWNELLYVL). The Lumenal portion of the chain corresponds to 776–778 (TSP). Residues 779-799 (ALLVLVVVICAVFFRQFFVSQ) form a helical membrane-spanning segment. The Cytoplasmic segment spans residues 800–891 (WHAFEETGPA…MRHRTTHKLD (92 aa)). Over residues 863–880 (STHADPAPSNTTVPTAQA) the composition is skewed to polar residues. The segment at 863–891 (STHADPAPSNTTVPTAQATMRHRTTHKLD) is disordered. The span at 882–891 (MRHRTTHKLD) shows a compositional bias: basic residues.

The protein belongs to the TRAFAC class dynamin-like GTPase superfamily. GB1/RHD3 GTPase family. RHD3 subfamily.

Its subcellular location is the endoplasmic reticulum membrane. Functionally, probable GTP-binding protein that may be involved in cell development. The polypeptide is Protein SEY1 homolog (Leishmania braziliensis).